Reading from the N-terminus, the 205-residue chain is MNDYKHPLRVGVGGPVGSGKTALLEALCKAMRDTYQLAVVTNDIYTKEDQRILTEAGALAPERIVGVETGGCPHTAIREDASMNLAAVEALSETFGNLDLIFVESGGDNLSATFSPELADLTIYVIDVAEGEKIPRKGGPGITKSDFLVINKTDLAPYVGASLEVMARDTMRMRGDRPWAFTNLKTGDGLATIIAFLEDKGMLRV.

GTP is bound at residue 14 to 21 (GPVGSGKT).

This sequence belongs to the SIMIBI class G3E GTPase family. UreG subfamily. In terms of assembly, homodimer. UreD, UreF and UreG form a complex that acts as a GTP-hydrolysis-dependent molecular chaperone, activating the urease apoprotein by helping to assemble the nickel containing metallocenter of UreC. The UreE protein probably delivers the nickel.

It localises to the cytoplasm. Its function is as follows. Facilitates the functional incorporation of the urease nickel metallocenter. This process requires GTP hydrolysis, probably effectuated by UreG. In Citrobacter koseri (strain ATCC BAA-895 / CDC 4225-83 / SGSC4696), this protein is Urease accessory protein UreG.